Reading from the N-terminus, the 547-residue chain is Inositol 1,4,5-trisphosphate receptor-interacting protein-like 1 (547 aa).

An N-terminal signal peptide occupies residues 1 to 22 (MAVISLMFLAVMYVVHHPLMVS). At 23 to 96 (DRMDLDTLAR…PFQAGGQDGG (74 aa)) the chain is on the extracellular side. A coiled-coil region spans residues 28-66 (DTLARSRQLEKRMSEEMRQLEMEFEERSRAAEQKQKVEN). The chain crosses the membrane as a helical span at residues 97-117 (PLGWILGNLWNAGLFCLFLIF). Topologically, residues 118-547 (ELLRQSMQHE…LPCSPVAGGL (430 aa)) are cytoplasmic.

The protein belongs to the ITPRIP family.

It is found in the cell membrane. Its function is as follows. Functions as a ligand of CD3E, inhibiting TCR-CD3 complex signaling to regulate T cell activation. Induces stable CD3E-NCK1 binding, thereby preventing the CD3E-ZAP70 interaction and subsequently inhibiting the activation of the downstream ERK-NFkB signaling cascade and calcium influx. This is Inositol 1,4,5-trisphosphate receptor-interacting protein-like 1 (Itpripl1) from Mus musculus (Mouse).